The following is a 254-amino-acid chain: Probable transcriptional regulatory protein Cyan7425_4347 (254 aa).

The protein belongs to the TACO1 family.

It localises to the cytoplasm. The protein is Probable transcriptional regulatory protein Cyan7425_4347 of Cyanothece sp. (strain PCC 7425 / ATCC 29141).